The primary structure comprises 900 residues: DNA mismatch repair protein MutS (900 aa).

637–644 (GPNMAGKS) provides a ligand contact to ATP.

This sequence belongs to the DNA mismatch repair MutS family.

Functionally, this protein is involved in the repair of mismatches in DNA. It is possible that it carries out the mismatch recognition step. This protein has a weak ATPase activity. The protein is DNA mismatch repair protein MutS of Methanosarcina acetivorans (strain ATCC 35395 / DSM 2834 / JCM 12185 / C2A).